We begin with the raw amino-acid sequence, 226 residues long: Biosynthetic peptidoglycan transglycosylase (226 aa).

The chain crosses the membrane as a helical span at residues 10 to 30; it reads IIMTLLALLILPYLLIPVYAL.

The protein belongs to the glycosyltransferase 51 family.

It is found in the cell inner membrane. It catalyses the reaction [GlcNAc-(1-&gt;4)-Mur2Ac(oyl-L-Ala-gamma-D-Glu-L-Lys-D-Ala-D-Ala)](n)-di-trans,octa-cis-undecaprenyl diphosphate + beta-D-GlcNAc-(1-&gt;4)-Mur2Ac(oyl-L-Ala-gamma-D-Glu-L-Lys-D-Ala-D-Ala)-di-trans,octa-cis-undecaprenyl diphosphate = [GlcNAc-(1-&gt;4)-Mur2Ac(oyl-L-Ala-gamma-D-Glu-L-Lys-D-Ala-D-Ala)](n+1)-di-trans,octa-cis-undecaprenyl diphosphate + di-trans,octa-cis-undecaprenyl diphosphate + H(+). The protein operates within cell wall biogenesis; peptidoglycan biosynthesis. In terms of biological role, peptidoglycan polymerase that catalyzes glycan chain elongation from lipid-linked precursors. The sequence is that of Biosynthetic peptidoglycan transglycosylase from Agrobacterium fabrum (strain C58 / ATCC 33970) (Agrobacterium tumefaciens (strain C58)).